The following is an 84-amino-acid chain: Acyl carrier protein homolog (84 aa).

Positions 4 to 79 (RDILLKIKEI…ELIAEVKHLI (76 aa)) constitute a Carrier domain. S39 carries the post-translational modification O-(pantetheine 4'-phosphoryl)serine.

In terms of processing, 4'-phosphopantetheine is transferred from CoA to a specific serine of the apo-ACP-like protein.

It functions in the pathway lipid metabolism; fatty acid biosynthesis. Its function is as follows. Carrier of the growing fatty acid chain in fatty acid biosynthesis. The polypeptide is Acyl carrier protein homolog (Mycoplasma pneumoniae (strain ATCC 29342 / M129 / Subtype 1) (Mycoplasmoides pneumoniae)).